Consider the following 71-residue polypeptide: Small ribosomal subunit protein bS21 (71 aa).

It belongs to the bacterial ribosomal protein bS21 family.

The sequence is that of Small ribosomal subunit protein bS21 from Ruthia magnifica subsp. Calyptogena magnifica.